The chain runs to 160 residues: NADH-quinone oxidoreductase subunit B (160 aa).

Positions 37, 38, 102, and 132 each coordinate [4Fe-4S] cluster.

The protein belongs to the complex I 20 kDa subunit family. As to quaternary structure, NDH-1 is composed of 14 different subunits. Subunits NuoB, C, D, E, F, and G constitute the peripheral sector of the complex. Requires [4Fe-4S] cluster as cofactor.

The protein localises to the cell inner membrane. It carries out the reaction a quinone + NADH + 5 H(+)(in) = a quinol + NAD(+) + 4 H(+)(out). NDH-1 shuttles electrons from NADH, via FMN and iron-sulfur (Fe-S) centers, to quinones in the respiratory chain. Couples the redox reaction to proton translocation (for every two electrons transferred, four hydrogen ions are translocated across the cytoplasmic membrane), and thus conserves the redox energy in a proton gradient. The protein is NADH-quinone oxidoreductase subunit B of Neisseria gonorrhoeae (strain ATCC 700825 / FA 1090).